The chain runs to 463 residues: ATP synthase subunit beta (463 aa).

152 to 159 (GGAGVGKT) contacts ATP.

This sequence belongs to the ATPase alpha/beta chains family. In terms of assembly, F-type ATPases have 2 components, CF(1) - the catalytic core - and CF(0) - the membrane proton channel. CF(1) has five subunits: alpha(3), beta(3), gamma(1), delta(1), epsilon(1). CF(0) has three main subunits: a(1), b(2) and c(9-12). The alpha and beta chains form an alternating ring which encloses part of the gamma chain. CF(1) is attached to CF(0) by a central stalk formed by the gamma and epsilon chains, while a peripheral stalk is formed by the delta and b chains.

The protein resides in the cell inner membrane. It carries out the reaction ATP + H2O + 4 H(+)(in) = ADP + phosphate + 5 H(+)(out). Its function is as follows. Produces ATP from ADP in the presence of a proton gradient across the membrane. The catalytic sites are hosted primarily by the beta subunits. This Shewanella sp. (strain ANA-3) protein is ATP synthase subunit beta.